We begin with the raw amino-acid sequence, 187 residues long: Auxin-binding protein T92 (187 aa).

Positions 1–20 (MARHIIILVAVFWFATAEAS) are cleaved as a signal peptide. A disulfide bridge connects residues Cys-22 and Cys-177. 3 residues coordinate Zn(2+): His-78, His-80, and Glu-84. N-linked (GlcNAc...) asparagine glycosylation is present at Asn-117. Position 128 (His-128) interacts with Zn(2+). A Prevents secretion from ER motif is present at residues 184–187 (KDEL).

As to quaternary structure, homodimer.

Its subcellular location is the endoplasmic reticulum lumen. This is probably a receptor for the plant hormone auxin. This Nicotiana tabacum (Common tobacco) protein is Auxin-binding protein T92 (T92).